Here is a 544-residue protein sequence, read N- to C-terminus: MSIFIGGAWPYANGSLHLGHIASLLPGDILARYYRAKGENVLYVSGSDCNGTPIAIRAKQEGVTAKEIANKYHEEFQRCFRNLGFTYDCYTRTDSEHHHKTVQKVFLRLLEEGHIYKKTVEQAYCETCTQFLPDRYVEGICPHCHEAARGDQCDACSAILDPLDLLEKKCKLCGSAPSVQETEHFYFALHTFQEQIKVAVETAKQTGTWRDNAIQLTERYVKEGLLDRAVSRDLPIGVPIPVEGYEDKKIYVWIEAVTGYYSASKHWAEKTGKDDQEFWDREAKTYYVHGKDNIPFHSIIWPAVLLGIGEGTIPRHIVSNEYLTVEKRKLSTSKNWAVWVPDILERYDPDSIRYFLTVNAPENRDTDFSWREFIYSHNSELLGAYGNFVNRTLKFIEKYYGGIVPKGSIDVELKDKIEGLYKHVGEAIEQTKFKVALEAIFDAVRFANKYFDERQPWKEREDDPVSCEETIYNCVYLIANFVNLLEPFLPFSSERVRNTLSIVKRNWEPQNTLPNRIDSVQPLFERIDVKQIECEIEKLYGAVK.

The 'HIGH' region signature appears at 10–20 (PYANGSLHLGH). 4 residues coordinate Zn(2+): C141, C144, C153, and C156. The 'KMSKS' region signature appears at 329–333 (KLSTS). T332 is an ATP binding site.

It belongs to the class-I aminoacyl-tRNA synthetase family. MetG type 1 subfamily. Monomer. It depends on Zn(2+) as a cofactor.

The protein localises to the cytoplasm. It carries out the reaction tRNA(Met) + L-methionine + ATP = L-methionyl-tRNA(Met) + AMP + diphosphate. In terms of biological role, is required not only for elongation of protein synthesis but also for the initiation of all mRNA translation through initiator tRNA(fMet) aminoacylation. This is Methionine--tRNA ligase 1 from Bacillus cereus (strain ATCC 10987 / NRS 248).